The primary structure comprises 472 residues: 3-isopropylmalate dehydratase large subunit (472 aa).

Positions 347, 407, and 410 each coordinate [4Fe-4S] cluster.

Belongs to the aconitase/IPM isomerase family. LeuC type 1 subfamily. Heterodimer of LeuC and LeuD. [4Fe-4S] cluster serves as cofactor.

The enzyme catalyses (2R,3S)-3-isopropylmalate = (2S)-2-isopropylmalate. The protein operates within amino-acid biosynthesis; L-leucine biosynthesis; L-leucine from 3-methyl-2-oxobutanoate: step 2/4. Catalyzes the isomerization between 2-isopropylmalate and 3-isopropylmalate, via the formation of 2-isopropylmaleate. This Synechococcus sp. (strain WH7803) protein is 3-isopropylmalate dehydratase large subunit.